An 856-amino-acid chain; its full sequence is Translation initiation factor IF-2 (856 aa).

In terms of domain architecture, tr-type G spans 356–526; it reads PRAPVVTVMG…LLIADLLELK (171 aa). The G1 stretch occupies residues 365-372; sequence GHVDHGKT. Residue 365-372 coordinates GTP; sequence GHVDHGKT. Residues 390–394 are G2; it reads GITQH. The segment at 412-415 is G3; it reads DTPG. GTP contacts are provided by residues 412–416 and 466–469; these read DTPGH and NKID. A G4 region spans residues 466–469; that stretch reads NKID. Positions 502–504 are G5; the sequence is SAK.

It belongs to the TRAFAC class translation factor GTPase superfamily. Classic translation factor GTPase family. IF-2 subfamily.

It is found in the cytoplasm. Functionally, one of the essential components for the initiation of protein synthesis. Protects formylmethionyl-tRNA from spontaneous hydrolysis and promotes its binding to the 30S ribosomal subunits. Also involved in the hydrolysis of GTP during the formation of the 70S ribosomal complex. The polypeptide is Translation initiation factor IF-2 (Ehrlichia ruminantium (strain Welgevonden)).